The following is a 156-amino-acid chain: Small ribosomal subunit protein uS7 (156 aa).

The protein belongs to the universal ribosomal protein uS7 family. In terms of assembly, part of the 30S ribosomal subunit. Contacts proteins S9 and S11.

Its function is as follows. One of the primary rRNA binding proteins, it binds directly to 16S rRNA where it nucleates assembly of the head domain of the 30S subunit. Is located at the subunit interface close to the decoding center, probably blocks exit of the E-site tRNA. The sequence is that of Small ribosomal subunit protein uS7 from Carboxydothermus hydrogenoformans (strain ATCC BAA-161 / DSM 6008 / Z-2901).